The primary structure comprises 101 residues: Small ribosomal subunit protein uS14 (101 aa).

Belongs to the universal ribosomal protein uS14 family. In terms of assembly, part of the 30S ribosomal subunit. Contacts proteins S3 and S10.

Functionally, binds 16S rRNA, required for the assembly of 30S particles and may also be responsible for determining the conformation of the 16S rRNA at the A site. In Serratia proteamaculans (strain 568), this protein is Small ribosomal subunit protein uS14.